Reading from the N-terminus, the 181-residue chain is ATP-dependent protease subunit HslV (181 aa).

Residue Thr7 is part of the active site. Na(+) is bound by residues Ala166, Cys169, and Thr172.

Belongs to the peptidase T1B family. HslV subfamily. In terms of assembly, a double ring-shaped homohexamer of HslV is capped on each side by a ring-shaped HslU homohexamer. The assembly of the HslU/HslV complex is dependent on binding of ATP.

Its subcellular location is the cytoplasm. It catalyses the reaction ATP-dependent cleavage of peptide bonds with broad specificity.. With respect to regulation, allosterically activated by HslU binding. In terms of biological role, protease subunit of a proteasome-like degradation complex believed to be a general protein degrading machinery. This is ATP-dependent protease subunit HslV from Anaeromyxobacter sp. (strain Fw109-5).